The following is a 369-amino-acid chain: Bi-functional coumaroyl CoA and feruloyl CoA ortho-hydroxylase Diox2 (369 aa).

In terms of domain architecture, Fe2OG dioxygenase spans 215-318 (GSRRVNLNYY…RISVPLFVNP (104 aa)). Tyr-224 serves as a coordination point for 2-oxoglutarate. Fe cation contacts are provided by His-239, Asp-241, and His-299. 2-oxoglutarate-binding residues include Arg-309 and Ser-311.

This sequence belongs to the iron/ascorbate-dependent oxidoreductase family. L-ascorbate serves as cofactor. Fe(2+) is required as a cofactor.

The enzyme catalyses (E)-4-coumaroyl-CoA + 2-oxoglutarate + O2 = (E)-2,4-dihydroxycinnamoyl-CoA + succinate + CO2. It catalyses the reaction (E)-feruloyl-CoA + 2-oxoglutarate + O2 = (E)-6-hydroxyferuloyl-CoA + succinate + CO2. Its pathway is phenylpropanoid metabolism. Its function is as follows. 2-oxoglutarate (OG)- and Fe(II)-dependent dioxygenase (2OGD) involved in scopoletin and umbelliferone biosynthesis. Converts feruloyl CoA into 6'-hydroxyferuloyl CoA, and p-coumaroyl CoA into 2,4-dihydroxycinnamoyl-CoA. This chain is Bi-functional coumaroyl CoA and feruloyl CoA ortho-hydroxylase Diox2, found in Ruta graveolens (Common rue).